The chain runs to 213 residues: Orotate phosphoribosyltransferase (213 aa).

K26 is a binding site for 5-phospho-alpha-D-ribose 1-diphosphate. An orotate-binding site is contributed by 34 to 35 (FF). 5-phospho-alpha-D-ribose 1-diphosphate-binding positions include 72 to 73 (YK), R99, K100, K103, H105, and 124 to 132 (DDVITAGTA). 2 residues coordinate orotate: T128 and R156.

It belongs to the purine/pyrimidine phosphoribosyltransferase family. PyrE subfamily. Homodimer. Requires Mg(2+) as cofactor.

It catalyses the reaction orotidine 5'-phosphate + diphosphate = orotate + 5-phospho-alpha-D-ribose 1-diphosphate. It participates in pyrimidine metabolism; UMP biosynthesis via de novo pathway; UMP from orotate: step 1/2. Functionally, catalyzes the transfer of a ribosyl phosphate group from 5-phosphoribose 1-diphosphate to orotate, leading to the formation of orotidine monophosphate (OMP). The polypeptide is Orotate phosphoribosyltransferase (Pseudomonas aeruginosa (strain UCBPP-PA14)).